Consider the following 371-residue polypeptide: Beta-1,3-galactosyltransferase 4 (371 aa).

Residues 1 to 4 lie on the Cytoplasmic side of the membrane; the sequence is MPLS. The helical; Signal-anchor for type II membrane protein transmembrane segment at 5 to 25 threads the bilayer; sequence LFRRLLLAVLLLVIIWTLFGP. Topologically, residues 26–371 are lumenal; the sequence is SGLGEELLSL…RCRFIAWLNS (346 aa). N-linked (GlcNAc...) asparagine glycosylation is present at Asn143. Positions 187–208 are disordered; that stretch reads GGPSEQWQKGKEPQEETTAVHK. Positions 194 to 207 are enriched in basic and acidic residues; the sequence is QKGKEPQEETTAVH.

This sequence belongs to the glycosyltransferase 31 family. Highly expressed in thymus, spleen, kidney and testis and, to a lesser extent, in brain and liver.

The protein resides in the golgi apparatus membrane. It catalyses the reaction a ganglioside GM2 (d18:1(4E)) + UDP-alpha-D-galactose = a ganglioside GM1 (d18:1(4E)) + UDP + H(+). The enzyme catalyses a ganglioside GM2 + UDP-alpha-D-galactose = a ganglioside GM1 + UDP + H(+). It carries out the reaction a ganglioside GD2 (d18:1(4E)) + UDP-alpha-D-galactose = a ganglioside GD1b (d18:1(4E)) + UDP + H(+). The catalysed reaction is a ganglioside GA2 (d18:1(4E)) + UDP-alpha-D-galactose = a ganglioside GA1 (d18:1(4E)) + UDP + H(+). Its pathway is protein modification; protein glycosylation. Functionally, involved in GM1/GD1B/GA1 ganglioside biosynthesis. This Rattus norvegicus (Rat) protein is Beta-1,3-galactosyltransferase 4 (B3galt4).